Here is a 418-residue protein sequence, read N- to C-terminus: MLKKDMNIADYDPQLFAAIEDETRRQEEHIELIASENYTSPRVLEAQGTQLTNKYAEGYPGKRYYGGCEHVDIVEELAISRAKELFGATYANVQPHSGSQANAAVFMALLQGGDTVLGMSLAHGGHLTHGSHVSFSGKLYNAVQYGIDETTGKIDYAEVERLAVEHKPKMIIAGFSAYSGIVDWGKFREIADKVGAYLFVDMAHVAGLVAAGIYPSPMPHAHVVTTTTHKTLAGPRGGLILSAINDEDIYKKLNSAVFPGGQGGPLMHVIAAKAVAFKEALDPEFTTYQEQVVVNAKAMARTFIERGYDVVSGGTDNHLFLLDLISKDITGKDADAALGNANITVNKNSVPNDPRSPFVTSGLRIGSPAITRRGFGEEESVQLTHWMCDILDDISDLAVSERVKAQVLELCARFPVYG.

(6S)-5,6,7,8-tetrahydrofolate is bound by residues Leu-121 and 125-127 (GHL). Lys-230 is modified (N6-(pyridoxal phosphate)lysine). 356-358 (SPF) contacts (6S)-5,6,7,8-tetrahydrofolate.

This sequence belongs to the SHMT family. Homodimer. Pyridoxal 5'-phosphate is required as a cofactor.

It localises to the cytoplasm. It catalyses the reaction (6R)-5,10-methylene-5,6,7,8-tetrahydrofolate + glycine + H2O = (6S)-5,6,7,8-tetrahydrofolate + L-serine. It participates in one-carbon metabolism; tetrahydrofolate interconversion. It functions in the pathway amino-acid biosynthesis; glycine biosynthesis; glycine from L-serine: step 1/1. Its function is as follows. Catalyzes the reversible interconversion of serine and glycine with tetrahydrofolate (THF) serving as the one-carbon carrier. This reaction serves as the major source of one-carbon groups required for the biosynthesis of purines, thymidylate, methionine, and other important biomolecules. Also exhibits THF-independent aldolase activity toward beta-hydroxyamino acids, producing glycine and aldehydes, via a retro-aldol mechanism. This is Serine hydroxymethyltransferase from Shewanella halifaxensis (strain HAW-EB4).